A 152-amino-acid polypeptide reads, in one-letter code: 3-hydroxyacyl-[acyl-carrier-protein] dehydratase FabZ (152 aa).

H58 is a catalytic residue.

It belongs to the thioester dehydratase family. FabZ subfamily.

The protein localises to the cytoplasm. It carries out the reaction a (3R)-hydroxyacyl-[ACP] = a (2E)-enoyl-[ACP] + H2O. In terms of biological role, involved in unsaturated fatty acids biosynthesis. Catalyzes the dehydration of short chain beta-hydroxyacyl-ACPs and long chain saturated and unsaturated beta-hydroxyacyl-ACPs. The sequence is that of 3-hydroxyacyl-[acyl-carrier-protein] dehydratase FabZ from Prochlorococcus marinus (strain MIT 9312).